A 392-amino-acid chain; its full sequence is Branched-chain-amino-acid aminotransferase, mitochondrial (392 aa).

A mitochondrion-targeting transit peptide spans 1–27; that stretch reads MAAAALGQIWARKLLSVPWLLCGPRRY. Tyrosine 168 provides a ligand contact to substrate. Lysine 229 is subject to N6-(pyridoxal phosphate)lysine. Lysine 321 is subject to N6-acetyllysine.

It belongs to the class-IV pyridoxal-phosphate-dependent aminotransferase family. As to quaternary structure, homodimer. Pyridoxal 5'-phosphate serves as cofactor. In terms of tissue distribution, ubiquitous.

It localises to the mitochondrion. It catalyses the reaction L-leucine + 2-oxoglutarate = 4-methyl-2-oxopentanoate + L-glutamate. The catalysed reaction is L-isoleucine + 2-oxoglutarate = (S)-3-methyl-2-oxopentanoate + L-glutamate. It carries out the reaction L-valine + 2-oxoglutarate = 3-methyl-2-oxobutanoate + L-glutamate. Functionally, catalyzes the first reaction in the catabolism of the essential branched chain amino acids leucine, isoleucine, and valine. May also function as a transporter of branched chain alpha-keto acids. The polypeptide is Branched-chain-amino-acid aminotransferase, mitochondrial (BCAT2) (Homo sapiens (Human)).